Consider the following 68-residue polypeptide: Potassium channel toxin epsilon-KTx 1.2 (68 aa).

A signal peptide spans 1 to 26 (MKFSCGFLLIFLVLSAMIATFSEVEA). Disulfide bonds link C30–C38, C33–C54, C37–C47, and C42–C52. Y55 carries the post-translational modification Tyrosine amide. A propeptide spanning residues 57-68 (RSDLNEEFENYQ) is cleaved from the precursor.

This sequence belongs to the short scorpion toxin superfamily. Potassium channel inhibitor family. Epsilon-KTx 01 subfamily. Expressed by the venom gland.

The protein localises to the secreted. Functionally, potassium channel blocker. At 3 uM, this toxin blocks voltage-gated potassium channels rKv1.2/KCNA2 (5%), hKv1.3/KCNA3 (10%),rKv1.4/KCNA4 (20%), Kv11/hERG (24%), and Shaker-IR (27%). This is Potassium channel toxin epsilon-KTx 1.2 from Tityus serrulatus (Brazilian scorpion).